The sequence spans 143 residues: Cold shock domain-containing protein CG9705 (143 aa).

The segment at 1–30 (MTEPRTPEKLLAAKPPVLHHNSHSPNASLQ) is disordered. Residues S22, S24, S28, and S33 each carry the phosphoserine modification. The 68-residue stretch at 54-121 (VVTGMVKSFS…KHQAVHVQIS (68 aa)) folds into the CSD domain. 2 positions are modified to phosphoserine: S139 and S140.

The sequence is that of Cold shock domain-containing protein CG9705 from Drosophila melanogaster (Fruit fly).